Here is a 275-residue protein sequence, read N- to C-terminus: Large ribosomal subunit protein uL2 (275 aa).

The disordered stretch occupies residues 223-260 (VAMNPVDHPHGGGEGRTSGGRHPVSPWGLPTKGYKTRS).

It belongs to the universal ribosomal protein uL2 family. Part of the 50S ribosomal subunit. Forms a bridge to the 30S subunit in the 70S ribosome.

One of the primary rRNA binding proteins. Required for association of the 30S and 50S subunits to form the 70S ribosome, for tRNA binding and peptide bond formation. It has been suggested to have peptidyltransferase activity; this is somewhat controversial. Makes several contacts with the 16S rRNA in the 70S ribosome. The sequence is that of Large ribosomal subunit protein uL2 from Legionella pneumophila (strain Lens).